A 520-amino-acid chain; its full sequence is Glycosyl hydrolase family 109 protein 5 (520 aa).

Residues 1–27 form the signal peptide; it reads MRTFKSLMISLCMGTTLCMCLPQTTTA. Residues 77–78, D99, 147–150, 167–168, and N196 contribute to the NAD(+) site; these read MR, WLHH, and EV. Substrate contacts are provided by residues Y225, R248, 260–263, and Y338; that span reads YATH. Residue Y260 coordinates NAD(+).

The protein belongs to the Gfo/Idh/MocA family. Glycosyl hydrolase 109 subfamily. NAD(+) serves as cofactor.

Glycosidase. In Phocaeicola vulgatus (strain ATCC 8482 / DSM 1447 / JCM 5826 / CCUG 4940 / NBRC 14291 / NCTC 11154) (Bacteroides vulgatus), this protein is Glycosyl hydrolase family 109 protein 5.